A 552-amino-acid chain; its full sequence is Non-structural protein NS1 (552 aa).

The protein belongs to the orbivirus non-structural protein NS1 family.

The sequence is that of Non-structural protein NS1 (Segment-5) from Antilocapra americana (Pronghorn).